A 344-amino-acid chain; its full sequence is MEFIRAEILGTTFETTSRYANVQPVGLGAFGLVCSAYDQITQQHVAVKKMMNPFANASIAKRTYREVKLLKQLRHENLIGLCDIFISPLEDIYLVTELLGTDLGRLLRARPLDNKFAQYFMYQILRGLKYIHSAGVIHRDLKPSNLLVNENCDLKICDFGLARVQEPQMTGYVSTRYYRAPEIMLTWQRYGKMVDIWSAGCILAEMLRGKPLFPGKDHIHQFFLITEVLGNPPPEVVQKITSGNTQRVVNSLPNQEPRPLRAVFHEFDNDVISLLEQLLLFDPDKRLTAETALQHPYLAPYHDPDDEPAALEKFDWSFNDADLPIDTWKLMMCVAIGSAKCAPN.

The Protein kinase domain occupies 19–298 (YANVQPVGLG…AETALQHPYL (280 aa)). ATP-binding positions include 25 to 33 (VGLGAFGLV) and Lys48. The active-site Proton acceptor is the Asp140. Position 170 is a phosphothreonine (Thr170). Positions 170–172 (TGY) match the TXY motif. Residue Tyr172 is modified to Phosphotyrosine.

This sequence belongs to the protein kinase superfamily. Ser/Thr protein kinase family. MAP kinase subfamily. HOG1 sub-subfamily. The cofactor is Mg(2+). In terms of processing, dually phosphorylated on Thr-170 and Tyr-172, which activates the enzyme.

It carries out the reaction L-seryl-[protein] + ATP = O-phospho-L-seryl-[protein] + ADP + H(+). It catalyses the reaction L-threonyl-[protein] + ATP = O-phospho-L-threonyl-[protein] + ADP + H(+). Activated by tyrosine and threonine phosphorylation. Functionally, mitogen-activated protein kinase required for growth on media where sorbitol or mannitol is the sole carbon source. The polypeptide is Mitogen-activated protein kinase mpkC (mpkC) (Aspergillus oryzae (strain ATCC 42149 / RIB 40) (Yellow koji mold)).